Reading from the N-terminus, the 275-residue chain is 2,3,4,5-tetrahydropyridine-2,6-dicarboxylate N-succinyltransferase (275 aa).

This sequence belongs to the transferase hexapeptide repeat family.

The protein resides in the cytoplasm. The enzyme catalyses (S)-2,3,4,5-tetrahydrodipicolinate + succinyl-CoA + H2O = (S)-2-succinylamino-6-oxoheptanedioate + CoA. It participates in amino-acid biosynthesis; L-lysine biosynthesis via DAP pathway; LL-2,6-diaminopimelate from (S)-tetrahydrodipicolinate (succinylase route): step 1/3. The chain is 2,3,4,5-tetrahydropyridine-2,6-dicarboxylate N-succinyltransferase from Paraburkholderia phymatum (strain DSM 17167 / CIP 108236 / LMG 21445 / STM815) (Burkholderia phymatum).